The following is a 299-amino-acid chain: Homoserine kinase (299 aa).

85–95 (PMSRGLGSSAT) is an ATP binding site.

Belongs to the GHMP kinase family. Homoserine kinase subfamily.

Its subcellular location is the cytoplasm. The enzyme catalyses L-homoserine + ATP = O-phospho-L-homoserine + ADP + H(+). It functions in the pathway amino-acid biosynthesis; L-threonine biosynthesis; L-threonine from L-aspartate: step 4/5. Catalyzes the ATP-dependent phosphorylation of L-homoserine to L-homoserine phosphate. The polypeptide is Homoserine kinase (Clostridium novyi (strain NT)).